Here is a 59-residue protein sequence, read N- to C-terminus: MAEEILNREYEVEYEGRKYFLRPVKAWVLQPPGKPGVVVALFKLPNGKSIRKVIMRLPP.

Belongs to the Cren7 family. As to quaternary structure, monomer. In terms of processing, methylated at multiple sites, to varying extents.

It localises to the chromosome. The protein localises to the cytoplasm. A chromatin protein, binds double-stranded DNA without sequence specificity. Constrains negative DNA supercoils. The chain is Chromatin protein Cren7 from Pyrobaculum aerophilum (strain ATCC 51768 / DSM 7523 / JCM 9630 / CIP 104966 / NBRC 100827 / IM2).